The primary structure comprises 226 residues: PKHD-type hydroxylase PP_0862 (226 aa).

Residues 78–178 enclose the Fe2OG dioxygenase domain; sequence KVFPPLINCY…RYAAFFWTQS (101 aa). Fe cation is bound by residues His-96, Asp-98, and His-159. Arg-169 is a 2-oxoglutarate binding site.

The cofactor is Fe(2+). Requires L-ascorbate as cofactor.

This chain is PKHD-type hydroxylase PP_0862, found in Pseudomonas putida (strain ATCC 47054 / DSM 6125 / CFBP 8728 / NCIMB 11950 / KT2440).